Consider the following 307-residue polypeptide: tRNA dimethylallyltransferase 1 (307 aa).

An ATP-binding site is contributed by 10–17 (GPTASGKT). Position 12–17 (12–17 (TASGKT)) interacts with substrate. Residues 35-38 (DSRQ) are interaction with substrate tRNA.

The protein belongs to the IPP transferase family. Monomer. Requires Mg(2+) as cofactor.

The enzyme catalyses adenosine(37) in tRNA + dimethylallyl diphosphate = N(6)-dimethylallyladenosine(37) in tRNA + diphosphate. Its function is as follows. Catalyzes the transfer of a dimethylallyl group onto the adenine at position 37 in tRNAs that read codons beginning with uridine, leading to the formation of N6-(dimethylallyl)adenosine (i(6)A). This chain is tRNA dimethylallyltransferase 1, found in Geotalea daltonii (strain DSM 22248 / JCM 15807 / FRC-32) (Geobacter daltonii).